Here is a 553-residue protein sequence, read N- to C-terminus: Phospholipase-B 81 (553 aa).

Residues 1–35 form the signal peptide; sequence MVRFGSAASSDNRRRRCWSWYWGGLLLLWAVAETR. Asn-69, Asn-313, Asn-416, and Asn-531 each carry an N-linked (GlcNAc...) asparagine glycan.

This sequence belongs to the phospholipase B-like family. In terms of tissue distribution, expressed by the venom gland.

It localises to the secreted. Functionally, may cause hemolysis. In Drysdalia coronoides (White-lipped snake), this protein is Phospholipase-B 81.